Consider the following 514-residue polypeptide: Sugar transport protein 3 (514 aa).

At 1–19 (MVAEEARKEAMAKSVSGGK) the chain is on the cytoplasmic side. Helical transmembrane passes span 20-40 (ITYFVVASCVMAAMGGVIFGY), 87-107 (LLTSFTSSLYVSGLIATLLAS), 124-144 (VSFLAGAALGGSAQNVAMLII), 147-167 (LLLGVGVGFANQSVPLYLSEM), 174-194 (GAISNGFQLCIGIGFLSANVI), 207-227 (ISLATAAIPASILTLGSLFLP), 289-309 (LVMALVIPFFQQVTGINVVAF), 327-347 (MSTLVTGIVGTSSTLLSMLVV), 356-376 (FLIGGLQMLVSQVTIGVIVMV), 392-412 (VVVLVCVYVAGFGWSWGPLGW), 430-450 (VTVAVSFVFTFAVAQSAPPML), and 456-476 (GIFFFYGGWLVVMTVAVQLFL). Residues 477–514 (PETKNVPIEKVVGLWEKHWFWRRMTSKRDIQETTILSH) are Cytoplasmic-facing.

This sequence belongs to the major facilitator superfamily. Sugar transporter (TC 2.A.1.1) family.

It is found in the membrane. In terms of biological role, mediates an active uptake of hexoses, probably by sugar/hydrogen symport. This is Sugar transport protein 3 (STP3) from Arabidopsis thaliana (Mouse-ear cress).